Reading from the N-terminus, the 163-residue chain is Probable histone H2A.4 (163 aa).

Disordered stretches follow at residues 1–30 (MEVG…VSRS) and 134–163 (SAAA…AAAA). The span at 12–21 (GAGGRRGGGG) shows a compositional bias: gly residues. Positions 147–163 (KSPKKATTKSPKKAAAA) are enriched in basic residues. 2 consecutive short sequence motifs (SPKK motif) follow at residues 148-151 (SPKK) and 156-159 (SPKK).

The protein belongs to the histone H2A family. As to quaternary structure, the nucleosome is a histone octamer containing two molecules each of H2A, H2B, H3 and H4 assembled in one H3-H4 heterotetramer and two H2A-H2B heterodimers. The octamer wraps approximately 147 bp of DNA.

It is found in the nucleus. The protein resides in the chromosome. Functionally, core component of nucleosome. Nucleosomes wrap and compact DNA into chromatin, limiting DNA accessibility to the cellular machineries which require DNA as a template. Histones thereby play a central role in transcription regulation, DNA repair, DNA replication and chromosomal stability. DNA accessibility is regulated via a complex set of post-translational modifications of histones, also called histone code, and nucleosome remodeling. The polypeptide is Probable histone H2A.4 (Oryza sativa subsp. indica (Rice)).